A 156-amino-acid chain; its full sequence is Succinate dehydrogenase assembly factor 2-B, mitochondrial (156 aa).

Residues 1-24 (MLRQFIISRVGRRLQLPMITQSRL) constitute a mitochondrion transit peptide.

Belongs to the SDHAF2 family. Interacts with the flavoprotein subunit within the SDH catalytic dimer.

It is found in the mitochondrion matrix. Its function is as follows. Plays an essential role in the assembly of succinate dehydrogenase (SDH), an enzyme complex (also referred to as respiratory complex II) that is a component of both the tricarboxylic acid (TCA) cycle and the mitochondrial electron transport chain, and which couples the oxidation of succinate to fumarate with the reduction of ubiquinone (coenzyme Q) to ubiquinol. Required for flavinylation (covalent attachment of FAD) of the flavoprotein subunit of the SDH catalytic dimer. This chain is Succinate dehydrogenase assembly factor 2-B, mitochondrial, found in Drosophila sechellia (Fruit fly).